The chain runs to 250 residues: 3-deoxy-manno-octulosonate cytidylyltransferase (250 aa).

It belongs to the KdsB family.

Its subcellular location is the cytoplasm. It catalyses the reaction 3-deoxy-alpha-D-manno-oct-2-ulosonate + CTP = CMP-3-deoxy-beta-D-manno-octulosonate + diphosphate. Its pathway is nucleotide-sugar biosynthesis; CMP-3-deoxy-D-manno-octulosonate biosynthesis; CMP-3-deoxy-D-manno-octulosonate from 3-deoxy-D-manno-octulosonate and CTP: step 1/1. It participates in bacterial outer membrane biogenesis; lipopolysaccharide biosynthesis. Its function is as follows. Activates KDO (a required 8-carbon sugar) for incorporation into bacterial lipopolysaccharide in Gram-negative bacteria. This is 3-deoxy-manno-octulosonate cytidylyltransferase from Pectobacterium atrosepticum (strain SCRI 1043 / ATCC BAA-672) (Erwinia carotovora subsp. atroseptica).